We begin with the raw amino-acid sequence, 937 residues long: MAAMECRDKAVVPPRRLVQARLPFKRLNPVPKEKHDAEAEGKKGKCSKSGLGQSKDSSTDTLHASTDNMENDCQLNSDVNFVPKLVNGKGPLDHFIQKSTKDNTDEIIVIIDSVDESNQRLSDDVDHVSFDSKASSAALTNGMLGKDMNKLSCLNSTQNSQTDDSMQTDVPCEAIANKGEDLVDGIQSCSGLTERNNLENTKVNQSELKDVIFEGKMPVVLLEDIMAAKSPQVTSLDGSVTSENETVELSHEGDSVLTNSSLSSLSVSSPEAQPVAETKRNTSPLAVSTPVRKVSQKLHKSSAEKEKLRLQRDQERADKLQKLQAEREEKGRLKEEAKAAKERAKEEAKKKKEEEKELKERERREKKEKEEKEKAEKLRVKEEKRKERQEALEAKLEEKRKKEEEKRLKEEEKRINAQKAEITRFFQKPKTPQAPKILAGSCGKFAPFEIKENMVLAPLCRIALYPDFLEQLDRLLRAQNSEVSFLRDLKCRKPRKTGPTFVNSSTDTVNSDVVVVDNCKTDAVPERGKFGRMKLLQFCENHRPAYWGTWNKKTTMIRPRNPWSKDSKLLDYEVDSDEEWEEEEPGESLSHSEGDDEEEGEDEDDDDGFFIPHGYLSEDEGVTEECDPENQKVRQKLKAKEWDELMAKGKRLHVLQPVKIGCIWESAQNDSGTNADLKILQQFTACILDSSVAEEEQQIQKCSKKRAKDQQILGQLLPLLHGNVNGSKVIIQEFQECCRQGLFSDVTAATDCGDTSPVSPNTSRPQTPVGEDSGVPSKARLKRIISENSVYEKRPEYRMCWYVHSEVLKSFDQEHLPVPCQWNYITQVPSSGKEDGGSVPGVAPVQSTPVSVKRKSTGSMCITKFMKRPRDAEQAEAMEMDGFQADTEEDEDDDDCMIVDVQPCKDSTLTVTETAPESRGTTAAHQDASMVSPSNTV.

A disordered region spans residues 21 to 69 (RLPFKRLNPVPKEKHDAEAEGKKGKCSKSGLGQSKDSSTDTLHASTDNM). Residues 31–43 (PKEKHDAEAEGKK) are compositionally biased toward basic and acidic residues. Polar residues predominate over residues 59–69 (TDTLHASTDNM). The short motif at 213–226 (FEGKMPVVLLEDIM) is the PxVxL motif element. Disordered stretches follow at residues 250-386 (SHEG…EKRK), 574-614 (VDSD…IPHG), 753-778 (GDTS…VPSK), 831-851 (SGKE…TPVS), and 910-937 (TVTE…SNTV). The span at 255-269 (SVLTNSSLSSLSVSS) shows a compositional bias: low complexity. Positions 301 to 386 (SSAEKEKLRL…KLRVKEEKRK (86 aa)) are enriched in basic and acidic residues. Composition is skewed to acidic residues over residues 574 to 586 (VDSD…EEPG) and 594 to 608 (GDDE…DDDG). Residues 756 to 766 (SPVSPNTSRPQ) show a composition bias toward polar residues.

The protein belongs to the CHAF1A family. As to quaternary structure, subunit of the CAF-1 complex that contains RBBP4, CHAF1B and CHAF1A. Interacts with CHAF1B, PCNA and RBBP4.

The protein localises to the nucleus. Functionally, acts as a component of the histone chaperone complex chromatin assembly factor 1 (CAF-1), which assembles histone octamers onto DNA during replication and repair. CAF-1 performs the first step of the nucleosome assembly process, bringing newly synthesized histones H3 and H4 to replicating DNA; histones H2A/H2B can bind to this chromatin precursor subsequent to DNA replication to complete the histone octamer. The sequence is that of Chromatin assembly factor 1 subunit A (CHAF1A) from Gallus gallus (Chicken).